A 210-amino-acid polypeptide reads, in one-letter code: Na(+)-translocating NADH-quinone reductase subunit D (210 aa).

Transmembrane regions (helical) follow at residues 10-30 (VLIG…GVCS), 42-62 (LVMT…ISLI), 72-92 (IIVQ…VLQA), 103-123 (VFVG…AYAM), 131-151 (FMDG…VGFV), and 178-198 (NGLL…IWII).

The protein belongs to the NqrDE/RnfAE family. In terms of assembly, composed of six subunits; NqrA, NqrB, NqrC, NqrD, NqrE and NqrF.

The protein resides in the cell inner membrane. It carries out the reaction a ubiquinone + n Na(+)(in) + NADH + H(+) = a ubiquinol + n Na(+)(out) + NAD(+). In terms of biological role, NQR complex catalyzes the reduction of ubiquinone-1 to ubiquinol by two successive reactions, coupled with the transport of Na(+) ions from the cytoplasm to the periplasm. NqrA to NqrE are probably involved in the second step, the conversion of ubisemiquinone to ubiquinol. The sequence is that of Na(+)-translocating NADH-quinone reductase subunit D from Shewanella pealeana (strain ATCC 700345 / ANG-SQ1).